Reading from the N-terminus, the 188-residue chain is dCTP deaminase (188 aa).

Residues 111–116 (KSTYAR), 135–137 (TLE), Q156, Y170, and Q180 each bind dCTP. E137 functions as the Proton donor/acceptor in the catalytic mechanism.

Belongs to the dCTP deaminase family. As to quaternary structure, homotrimer.

It catalyses the reaction dCTP + H2O + H(+) = dUTP + NH4(+). Its pathway is pyrimidine metabolism; dUMP biosynthesis; dUMP from dCTP (dUTP route): step 1/2. Catalyzes the deamination of dCTP to dUTP. This is dCTP deaminase from Neisseria meningitidis serogroup C / serotype 2a (strain ATCC 700532 / DSM 15464 / FAM18).